The primary structure comprises 848 residues: Phosphatidate phosphatase LPIN3 (848 aa).

The segment at 1–108 (MNYVGQLAET…VPPRLCTSPI (108 aa)) is N-LIP. Disordered regions lie at residues 97-233 (EDVP…SPLR), 271-298 (PEEPSPSSSPSEAGVDTLSPPVLHPGVR), and 314-373 (AVDS…NQHL). A Nuclear localization signal motif is present at residues 135 to 144 (GRRKRRRRRK). Over residues 135–146 (GRRKRRRRRKPR) the composition is skewed to basic residues. Acidic residues predominate over residues 151-164 (DAVDSSSEELEAGA). A phosphoserine mark is found at Ser-155 and Ser-156. Low complexity predominate over residues 165 to 191 (ESELTLLEKPTPESPSAQEAEEPSSQP). Ser-218 bears the Phosphoserine mark. A compositionally biased stretch (low complexity) spans 271–282 (PEEPSPSSSPSE). Polar residues predominate over residues 342–358 (KSWSWTTPESHTPSGHP). Ser-460 carries the post-translational modification Phosphoserine. The segment covering 536 to 556 (EEHSSQREKAATRKQQGEKTE) has biased composition (basic and acidic residues). Residues 536-568 (EEHSSQREKAATRKQQGEKTEVLSSDDDVPDSP) form a disordered region. Residues 587 to 789 (YKKSLRLSSD…RIFTVNPRGE (203 aa)) form a C-LIP region. The short motif at 641–645 (DIDGT) is the DXDXT motif element. An LXXIL motif motif is present at residues 652 to 656 (LGHIL).

This sequence belongs to the lipin family. Requires Mg(2+) as cofactor. In terms of tissue distribution, significant expression in intestine and other regions of the gastrointestinal tract.

It localises to the nucleus. The enzyme catalyses a 1,2-diacyl-sn-glycero-3-phosphate + H2O = a 1,2-diacyl-sn-glycerol + phosphate. Its activity is regulated as follows. Inhibited by N-ethylmaleimide. Functionally, magnesium-dependent phosphatidate phosphatase enzyme which catalyzes the conversion of phosphatidic acid to diacylglycerol during triglyceride, phosphatidylcholine and phosphatidylethanolamine biosynthesis therefore regulates fatty acid metabolism. This Mus musculus (Mouse) protein is Phosphatidate phosphatase LPIN3.